The following is a 180-amino-acid chain: Large ribosomal subunit protein uL5 (180 aa).

This sequence belongs to the universal ribosomal protein uL5 family. In terms of assembly, part of the 50S ribosomal subunit; part of the 5S rRNA/L5/L18/L25 subcomplex. Contacts the 5S rRNA and the P site tRNA. Forms a bridge to the 30S subunit in the 70S ribosome.

Its function is as follows. This is one of the proteins that bind and probably mediate the attachment of the 5S RNA into the large ribosomal subunit, where it forms part of the central protuberance. In the 70S ribosome it contacts protein S13 of the 30S subunit (bridge B1b), connecting the 2 subunits; this bridge is implicated in subunit movement. Contacts the P site tRNA; the 5S rRNA and some of its associated proteins might help stabilize positioning of ribosome-bound tRNAs. The protein is Large ribosomal subunit protein uL5 of Limosilactobacillus reuteri (strain DSM 20016) (Lactobacillus reuteri).